A 79-amino-acid polypeptide reads, in one-letter code: uncharacterized protein (79 aa).

The helical transmembrane segment at 15 to 37 threads the bilayer; sequence KSIVSVLALTSLGCGVFVISATA.

It localises to the membrane. This is an uncharacterized protein from Dictyostelium discoideum (Social amoeba).